A 141-amino-acid chain; its full sequence is MQLTSFTDYGLRALTYMASLPEGQMTSISQVTEVYGVSRNHMVKIINQLSRVGLVTAVRGKNGGIRLGKPADQIRIGDVVRQLEPLSLVNCSSDFCHITPACRLKQVLNQAVQSFLNELDNYTLADMVQDNTPLYKLLFVE.

An HTH rrf2-type domain is found at Gln2–Gln129. Residues Ile28–Arg51 constitute a DNA-binding region (H-T-H motif). [2Fe-2S] cluster is bound by residues Cys91, Cys96, and Cys102.

It depends on [2Fe-2S] cluster as a cofactor.

Its function is as follows. Nitric oxide-sensitive repressor of genes involved in protecting the cell against nitrosative stress. May require iron for activity. This is HTH-type transcriptional repressor NsrR from Yersinia enterocolitica serotype O:8 / biotype 1B (strain NCTC 13174 / 8081).